A 539-amino-acid polypeptide reads, in one-letter code: 4-hydroxybenzoate--CoA/benzoate--CoA ligase (539 aa).

This sequence belongs to the ATP-dependent AMP-binding enzyme family. Benzoate-CoA ligase subfamily. In terms of assembly, homodimer. The N-terminus is blocked.

The catalysed reaction is 4-hydroxybenzoate + ATP + CoA = 4-hydroxybenzoyl-CoA + AMP + diphosphate. It carries out the reaction benzoate + ATP + CoA = benzoyl-CoA + AMP + diphosphate. Its function is as follows. Catalyzes the ligation of 4-hydroxybenzoate, benzoate or cyclohex-1,4-dienecarboxylate and CoA at the expense of ATP. The enzyme shows low activity towards cyclo-2,5-dienecarboxylate, 4-fluorobenzoate, 4-chlorobenzoate and 2-methoxybenzoate. The sequence is that of 4-hydroxybenzoate--CoA/benzoate--CoA ligase (hbaA) from Rhodopseudomonas palustris (strain ATCC BAA-98 / CGA009).